Here is a 198-residue protein sequence, read N- to C-terminus: Cytochrome c oxidase assembly protein CtaG (198 aa).

The Cytoplasmic portion of the chain corresponds to 1–12; it reads MADNGQADRKER. The helical; Signal-anchor for type II membrane protein transmembrane segment at 13–35 threads the bilayer; that stretch reads SNGVIVGTCLAFVAGMIGMAYAA. At 36 to 198 the chain is on the periplasmic side; the sequence is VPLYDMFCRV…QVKAKAENKL (163 aa).

The protein belongs to the COX11/CtaG family.

It is found in the cell inner membrane. Exerts its effect at some terminal stage of cytochrome c oxidase synthesis, probably by being involved in the insertion of the copper B into subunit I. The polypeptide is Cytochrome c oxidase assembly protein CtaG (Rhizobium meliloti (strain 1021) (Ensifer meliloti)).